The chain runs to 466 residues: Argininosuccinate lyase 1 (466 aa).

It belongs to the lyase 1 family. Argininosuccinate lyase subfamily.

The protein resides in the cytoplasm. It catalyses the reaction 2-(N(omega)-L-arginino)succinate = fumarate + L-arginine. It functions in the pathway amino-acid biosynthesis; L-arginine biosynthesis; L-arginine from L-ornithine and carbamoyl phosphate: step 3/3. The sequence is that of Argininosuccinate lyase 1 from Agrobacterium fabrum (strain C58 / ATCC 33970) (Agrobacterium tumefaciens (strain C58)).